A 1015-amino-acid polypeptide reads, in one-letter code: SPOC domain-containing protein 1 (1015 aa).

Disordered stretches follow at residues 73-97, 118-159, 213-320, and 344-406; these read MVSP…SPVL, GFSL…EPGG, LYPE…PRLE, and AASS…MTPL. The segment covering 304 to 320 has biased composition (basic and acidic residues); that stretch reads SQDHAEGASKKDFPRLE. Positions 373 to 382 are enriched in polar residues; the sequence is AHPTPCQSDP. Over residues 388-397 the composition is skewed to basic and acidic residues; sequence AEPHQQRAED. One can recognise a TFIIS central domain in the interval 410–530; that stretch reads VRSTVVRAMQ…IIEQQQKELY (121 aa). The disordered stretch occupies residues 643–685; it reads IQKAPGPAPASSPEVLKVGETPPKEPQDRLQMPAGLKNAPPSP. Residues 688 to 791 enclose the SPOC domain; it reads WEGSLDMFSI…VQQVKMVLLP (104 aa). Disordered regions lie at residues 858–906 and 967–1015; these read PEDR…PGWG and QSQD…EHEC. Positions 967-978 are enriched in polar residues; sequence QSQDSLPPSTVV.

In terms of assembly, interacts with DNMT3A, DNMT3C and DNMT3L. Interacts with C19orf84 homolog. Interacts with SPIN1; promoting recruitment to transposons marked with histone H3 trimethylated at both 'Lys-4' and 'Lys-9' (H3K4me3K9me3).

Its subcellular location is the nucleus. It localises to the chromosome. Its function is as follows. Protein adapter that acts as an essential executor of PIWIL4-piRNA pathway directed transposon DNA methylation and silencing in the male embryonic germ cells. Recruited to young transposons, which are specifically marked with histone H3 trimethylated at both 'Lys-4' and 'Lys-9' (H3K4me3K9me3), via its association with SPIN1 chromatin reader, and associates with the de novo DNA methylation machinery and repressive chromatin remodeling complexes. Following this, PIWIL4 engages with nascent transposable element transcript to direct piRNA-directed DNA methylation. Not required for piRNA biosynthesis. In Mus musculus (Mouse), this protein is SPOC domain-containing protein 1.